The primary structure comprises 341 residues: Anthranilate phosphoribosyltransferase (341 aa).

5-phospho-alpha-D-ribose 1-diphosphate-binding positions include G79, 82-83 (GD), T87, 89-92 (NIST), 107-115 (KHGNRAVSS), and S119. Anthranilate is bound at residue G79. S91 is a binding site for Mg(2+). Residue N110 coordinates anthranilate. Residue R165 participates in anthranilate binding. Residues D224 and E225 each coordinate Mg(2+).

It belongs to the anthranilate phosphoribosyltransferase family. In terms of assembly, homodimer. Mg(2+) is required as a cofactor.

It carries out the reaction N-(5-phospho-beta-D-ribosyl)anthranilate + diphosphate = 5-phospho-alpha-D-ribose 1-diphosphate + anthranilate. It functions in the pathway amino-acid biosynthesis; L-tryptophan biosynthesis; L-tryptophan from chorismate: step 2/5. Catalyzes the transfer of the phosphoribosyl group of 5-phosphorylribose-1-pyrophosphate (PRPP) to anthranilate to yield N-(5'-phosphoribosyl)-anthranilate (PRA). The polypeptide is Anthranilate phosphoribosyltransferase (Bacillus thuringiensis subsp. konkukian (strain 97-27)).